An 812-amino-acid polypeptide reads, in one-letter code: Axin-2 (812 aa).

The interval 1–43 (MNRTLTDPMVSSFREDDPRPPVPGEEGETTCHHPSKLAMMRPK) is disordered. Positions 84–203 (SLHFLLGDQD…LTSDIYLEYV (120 aa)) constitute an RGS domain. Disordered stretches follow at residues 275–326 (SYRR…AIPP), 388–430 (ETMS…TCEE), 446–484 (TPGC…SSMN), and 609–726 (RQTK…SGCH). A compositionally biased stretch (polar residues) spans 285–303 (NRFTSGYSFAPATSANDSE). Residues 305-323 (SSDALTDDSMSMTDSSVDA) are compositionally biased toward low complexity. Residues 329–415 (LGSKKQLQRE…RDESEMSSSS (87 aa)) are interaction with GSK3B. Basic and acidic residues predominate over residues 388–397 (ETMSSLEERL). The span at 401–410 (QEEEERDESE) shows a compositional bias: acidic residues. Residues 411–421 (MSSSSASHSLP) are compositionally biased toward low complexity. An interaction with beta-catenin region spans residues 415–467 (SASHSLPLLPPGTCEEDPQAILDEHLSRVLKTPGCQSPGLLRHSPRSRSPEQR). Residues 475–484 (STRSQSSSMN) show a composition bias toward polar residues. Positions 672-683 (EEARRRLEEVSK) are enriched in basic and acidic residues. Positions 730–812 (GSETVVTYFF…KILGKVDRMD (83 aa)) constitute a DIX domain.

Interacts with hwa; leading to promote the tankyrase-mediated degradation of axin1. ADP-ribosylated by tankyrase tnks and tnks2. Poly-ADP-ribosylated protein is recognized by rnf146, followed by ubiquitination and subsequent activation of the Wnt signaling pathway. In terms of processing, ubiquitinated by rnf146 when poly-ADP-ribosylated, leading to its degradation and subsequent activation of the Wnt signaling pathway.

The protein localises to the cytoplasm. Its function is as follows. Component of the beta-catenin destruction complex required for regulating ctnnb1 levels through phosphorylation and ubiquitination, and modulating Wnt-signaling. Controls dorsoventral patterning by down-regulating ctnnb1 to inhibit the Wnt signaling pathway and ventralize embryos. In Danio rerio (Zebrafish), this protein is Axin-2 (axin2).